Reading from the N-terminus, the 1041-residue chain is RAS protein activator like-3 (1041 aa).

Residues 1–59 (MKPECGQTMFRTFWSRSRDSSAMDPPLQSEEDSQTQPSLPSPLTSYRWHTGGSGEKAAG) are disordered. The segment covering 34-44 (QTQPSLPSPLT) has biased composition (polar residues). A phosphoserine mark is found at serine 41, serine 74, serine 187, serine 189, serine 190, serine 193, serine 239, serine 252, serine 256, and serine 259. Residues 218–243 (SNQVHNVRKLLKRLKEKKRAKSELGA) are a coiled coil. A PH domain is found at 220–321 (QVHNVRKLLK…WIEDLRRQFQ (102 aa)). The disordered stretch occupies residues 234 to 256 (KKRAKSELGAYTPRDGPPSALGS). At threonine 262 the chain carries Phosphothreonine. One can recognise a C2 domain in the interval 312–430 (WIEDLRRQFQ…APAAGLERWF (119 aa)). One can recognise a Ras-GAP domain in the interval 500-708 (GRAQALVTDL…PAMQHFLDQV (209 aa)). Residues 790–910 (GEKPGFLAPR…PGDRYQTTGT (121 aa)) form a disordered region. Phosphoserine occurs at positions 813 and 816. Positions 850–866 (RPTHRRPSAGSKPRPKG) are enriched in basic residues. Residues 931–1013 (QKALSLLVES…LRDSLQSLQL (83 aa)) adopt a coiled-coil conformation. Residues 1016-1041 (KTPGSRSQPLPLKAPCVNGADLSMGT) form a disordered region.

In terms of tissue distribution, predominantly expressed in hematopoietic tissues.

The protein resides in the cytoplasm. Its subcellular location is the cell cortex. Functions as a Ras GTPase-activating protein. Plays an important role in the expansion and functions of natural killer T (NKT) cells in the liver by negatively regulating RAS activity and the down-stream ERK signaling pathway. In Mus musculus (Mouse), this protein is RAS protein activator like-3 (Rasal3).